The sequence spans 295 residues: Nucleotide-binding protein PEPE_0450 (295 aa).

Residue 12-19 (GMSGAGKT) coordinates ATP. GTP is bound at residue 62–65 (DLRS).

The protein belongs to the RapZ-like family.

Functionally, displays ATPase and GTPase activities. This chain is Nucleotide-binding protein PEPE_0450, found in Pediococcus pentosaceus (strain ATCC 25745 / CCUG 21536 / LMG 10740 / 183-1w).